Reading from the N-terminus, the 688-residue chain is Elongation factor G (688 aa).

The region spanning 8–282 (KNFRNFGIMA…AVVDFLPSPV (275 aa)) is the tr-type G domain. GTP contacts are provided by residues 17-24 (AHIDAGKT), 81-85 (DTPGH), and 135-138 (NKMD).

The protein belongs to the TRAFAC class translation factor GTPase superfamily. Classic translation factor GTPase family. EF-G/EF-2 subfamily.

The protein resides in the cytoplasm. Functionally, catalyzes the GTP-dependent ribosomal translocation step during translation elongation. During this step, the ribosome changes from the pre-translocational (PRE) to the post-translocational (POST) state as the newly formed A-site-bound peptidyl-tRNA and P-site-bound deacylated tRNA move to the P and E sites, respectively. Catalyzes the coordinated movement of the two tRNA molecules, the mRNA and conformational changes in the ribosome. This is Elongation factor G (fusA) from Mycoplasma genitalium (strain ATCC 33530 / DSM 19775 / NCTC 10195 / G37) (Mycoplasmoides genitalium).